Consider the following 433-residue polypeptide: MSVVDILSERGFVEAFTHEQELRDLAAESAVTCYIGFDPTASSLHVGSLVPIMALAHMQRNGHRPIALVGGGTGLVGDPSGKTEMRQLITPETVEANIEGIQRQLSRFIDFDGGKALLVNNADWLTGLEYIPFLRDIGRHFSVNRMIKAESYRMRLESEEGLSFIEFNYMLLQAYDFLKLCGDRDCVLQMGGSDQWGNIVAGIDLVRRVLNRQVYGLTFPLITTSSGAKMGKTAAGAVWLDAERTSPYDYYQYWINTDDQDVARFLSLFTFLPMPEIQEVKRISGADLNSAKAVLAFEATRIAHGTDAAVQAHSDAAVNFGRRDIPQDLLPSSTIPRDAEGTGAAVSGTAPQTEMTMAELSEGIPAFVLFHTVGLADSKGQARRLIQQGGGYVNDRRIESDEYRVSAEDLDDAKIVLRAGKKRYHTIVVRKGA.

Position 34 (Tyr34) interacts with L-tyrosine. A 'HIGH' region motif is present at residues 39–48; sequence PTASSLHVGS. L-tyrosine contacts are provided by Tyr169 and Gln173. Positions 229–233 match the 'KMSKS' region motif; it reads KMGKT. Position 232 (Lys232) interacts with ATP. The region spanning 364–432 is the S4 RNA-binding domain; it reads IPAFVLFHTV…RYHTIVVRKG (69 aa).

The protein belongs to the class-I aminoacyl-tRNA synthetase family. TyrS type 1 subfamily. As to quaternary structure, homodimer.

The protein resides in the cytoplasm. It carries out the reaction tRNA(Tyr) + L-tyrosine + ATP = L-tyrosyl-tRNA(Tyr) + AMP + diphosphate + H(+). In terms of biological role, catalyzes the attachment of tyrosine to tRNA(Tyr) in a two-step reaction: tyrosine is first activated by ATP to form Tyr-AMP and then transferred to the acceptor end of tRNA(Tyr). This chain is Tyrosine--tRNA ligase, found in Desulfosudis oleivorans (strain DSM 6200 / JCM 39069 / Hxd3) (Desulfococcus oleovorans).